The primary structure comprises 335 residues: Aliphatic sulfonates import ATP-binding protein SsuB (335 aa).

The disordered stretch occupies residues 29–61 (DGDAQDAAVYERDGGAHAPPFASGGAPPDGDRA). The 220-residue stretch at 74-293 (VRLTRVSKRY…ARASAAFAAL (220 aa)) folds into the ABC transporter domain. 106–113 (GRSGCGKS) contributes to the ATP binding site. The disordered stretch occupies residues 308–335 (APAAPNAAGPEGASRGRAAPASGLRWAV).

It belongs to the ABC transporter superfamily. Aliphatic sulfonates importer (TC 3.A.1.17.2) family. In terms of assembly, the complex is composed of two ATP-binding proteins (SsuB), two transmembrane proteins (SsuC) and a solute-binding protein (SsuA).

The protein localises to the cell inner membrane. It catalyses the reaction ATP + H2O + aliphatic sulfonate-[sulfonate-binding protein]Side 1 = ADP + phosphate + aliphatic sulfonateSide 2 + [sulfonate-binding protein]Side 1.. Its function is as follows. Part of the ABC transporter complex SsuABC involved in aliphatic sulfonates import. Responsible for energy coupling to the transport system. In Burkholderia pseudomallei (strain 1710b), this protein is Aliphatic sulfonates import ATP-binding protein SsuB.